The chain runs to 143 residues: Ribosome-binding factor A (143 aa).

Residues 123 to 143 are disordered; that stretch reads DKSLQENYKQNDKETKAEKLR.

The protein belongs to the RbfA family. Monomer. Binds 30S ribosomal subunits, but not 50S ribosomal subunits or 70S ribosomes.

It localises to the cytoplasm. Its function is as follows. One of several proteins that assist in the late maturation steps of the functional core of the 30S ribosomal subunit. Associates with free 30S ribosomal subunits (but not with 30S subunits that are part of 70S ribosomes or polysomes). Required for efficient processing of 16S rRNA. May interact with the 5'-terminal helix region of 16S rRNA. The chain is Ribosome-binding factor A from Francisella tularensis subsp. mediasiatica (strain FSC147).